We begin with the raw amino-acid sequence, 112 residues long: MAEDIEEIRKRKLMELQKRYLEQQKAQEEAIKREMELQAQIDAIMRKILTPDARERLGRVKLVKPELARQVELVLVQLYQAGQIREPIDDAKLKKILAQIDARTRREFRIKW.

It belongs to the PDCD5 family.

This chain is DNA-binding protein TGAM_1196, found in Thermococcus gammatolerans (strain DSM 15229 / JCM 11827 / EJ3).